Here is a 486-residue protein sequence, read N- to C-terminus: UDP-N-acetylmuramate--L-alanine ligase (486 aa).

Residue 129–135 (GTHGKTT) coordinates ATP.

This sequence belongs to the MurCDEF family.

The protein resides in the cytoplasm. The enzyme catalyses UDP-N-acetyl-alpha-D-muramate + L-alanine + ATP = UDP-N-acetyl-alpha-D-muramoyl-L-alanine + ADP + phosphate + H(+). Its pathway is cell wall biogenesis; peptidoglycan biosynthesis. Its function is as follows. Cell wall formation. The chain is UDP-N-acetylmuramate--L-alanine ligase from Vibrio atlanticus (strain LGP32) (Vibrio splendidus (strain Mel32)).